The chain runs to 648 residues: p-hydroxybenzoic acid efflux pump subunit AaeB (648 aa).

Transmembrane regions (helical) follow at residues 11–31 (FACK…YFGL), 41–61 (AALV…AGAI), 65–87 (GWLR…MLLI), 91–110 (LLMI…LSSL), 125–145 (TALI…QLAL), 150–170 (EIVL…PRSV), 369–389 (LFWL…IAVV), 406–426 (FLMG…VILP), 430–450 (QSLV…GMEV), 455–474 (LGSL…SNPM), and 481–501 (FVDS…VLLA).

This sequence belongs to the aromatic acid exporter ArAE (TC 2.A.85) family.

The protein resides in the cell inner membrane. Its function is as follows. Forms an efflux pump with AaeA. Could function as a metabolic relief valve, allowing to eliminate certain compounds when they accumulate to high levels in the cell. The protein is p-hydroxybenzoic acid efflux pump subunit AaeB (aaeB) of Edwardsiella tarda (strain FL6-60).